The primary structure comprises 130 residues: Small ribosomal subunit protein uS8 (130 aa).

The protein belongs to the universal ribosomal protein uS8 family. In terms of assembly, part of the 30S ribosomal subunit. Contacts proteins S5 and S12.

In terms of biological role, one of the primary rRNA binding proteins, it binds directly to 16S rRNA central domain where it helps coordinate assembly of the platform of the 30S subunit. The polypeptide is Small ribosomal subunit protein uS8 (Psychromonas ingrahamii (strain DSM 17664 / CCUG 51855 / 37)).